The chain runs to 327 residues: Aspartate--ammonia ligase (327 aa).

The protein belongs to the class-II aminoacyl-tRNA synthetase family. AsnA subfamily.

The protein resides in the cytoplasm. It catalyses the reaction L-aspartate + NH4(+) + ATP = L-asparagine + AMP + diphosphate + H(+). The protein operates within amino-acid biosynthesis; L-asparagine biosynthesis; L-asparagine from L-aspartate (ammonia route): step 1/1. This chain is Aspartate--ammonia ligase, found in Bacillus cereus (strain G9842).